We begin with the raw amino-acid sequence, 40 residues long: Large ribosomal subunit protein bL36 (40 aa).

This sequence belongs to the bacterial ribosomal protein bL36 family.

The protein is Large ribosomal subunit protein bL36 of Corynebacterium glutamicum (strain R).